We begin with the raw amino-acid sequence, 537 residues long: CTP synthase (537 aa).

Positions 1 to 265 (MTKFIFVTGG…GKYLIKRLKL (265 aa)) are amidoligase domain. Ser13 contributes to the CTP binding site. Residue Ser13 participates in UTP binding. 14–19 (GLGKGI) serves as a coordination point for ATP. Tyr54 serves as a coordination point for L-glutamine. Position 71 (Asp71) interacts with ATP. Residues Asp71 and Glu139 each contribute to the Mg(2+) site. Residues 146 to 148 (DIE), 186 to 191 (KTKPTQ), and Lys222 contribute to the CTP site. UTP-binding positions include 186 to 191 (KTKPTQ) and Lys222. The Glutamine amidotransferase type-1 domain maps to 290–532 (EIAIVGKYVK…VRAAKEYKQE (243 aa)). An L-glutamine-binding site is contributed by Gly351. Cys378 (nucleophile; for glutamine hydrolysis) is an active-site residue. Residues 379 to 382 (FGFQ), Glu402, and Arg459 contribute to the L-glutamine site. Active-site residues include His505 and Glu507.

This sequence belongs to the CTP synthase family. As to quaternary structure, homotetramer.

It carries out the reaction UTP + L-glutamine + ATP + H2O = CTP + L-glutamate + ADP + phosphate + 2 H(+). It catalyses the reaction L-glutamine + H2O = L-glutamate + NH4(+). The catalysed reaction is UTP + NH4(+) + ATP = CTP + ADP + phosphate + 2 H(+). It functions in the pathway pyrimidine metabolism; CTP biosynthesis via de novo pathway; CTP from UDP: step 2/2. Allosterically activated by GTP, when glutamine is the substrate; GTP has no effect on the reaction when ammonia is the substrate. The allosteric effector GTP functions by stabilizing the protein conformation that binds the tetrahedral intermediate(s) formed during glutamine hydrolysis. Inhibited by the product CTP, via allosteric rather than competitive inhibition. In terms of biological role, catalyzes the ATP-dependent amination of UTP to CTP with either L-glutamine or ammonia as the source of nitrogen. Regulates intracellular CTP levels through interactions with the four ribonucleotide triphosphates. The sequence is that of CTP synthase from Pyrococcus horikoshii (strain ATCC 700860 / DSM 12428 / JCM 9974 / NBRC 100139 / OT-3).